The following is a 126-amino-acid chain: Large ribosomal subunit protein bL17 (126 aa).

This sequence belongs to the bacterial ribosomal protein bL17 family. As to quaternary structure, part of the 50S ribosomal subunit. Contacts protein L32.

The polypeptide is Large ribosomal subunit protein bL17 (Vibrio atlanticus (strain LGP32) (Vibrio splendidus (strain Mel32))).